The primary structure comprises 291 residues: Tyrosine recombinase XerD (291 aa).

A Core-binding (CB) domain is found at 1–82 (MEEGLIDRLL…ACKRLYIWME (82 aa)). The Tyr recombinase domain maps to 103 to 285 (NIPTLITEQQ…ANVWLQGVVK (183 aa)). Catalysis depends on residues Arg-143, Lys-167, His-237, Arg-240, and His-263. The O-(3'-phospho-DNA)-tyrosine intermediate role is filled by Tyr-272.

Belongs to the 'phage' integrase family. XerD subfamily. As to quaternary structure, forms a cyclic heterotetrameric complex composed of two molecules of XerC and two molecules of XerD.

It is found in the cytoplasm. Its function is as follows. Site-specific tyrosine recombinase, which acts by catalyzing the cutting and rejoining of the recombining DNA molecules. The XerC-XerD complex is essential to convert dimers of the bacterial chromosome into monomers to permit their segregation at cell division. It also contributes to the segregational stability of plasmids. This chain is Tyrosine recombinase XerD, found in Neisseria meningitidis serogroup A / serotype 4A (strain DSM 15465 / Z2491).